Reading from the N-terminus, the 122-residue chain is Large ribosomal subunit protein uL18 (122 aa).

The segment at 1 to 24 (MLKKADKNANRLQRHKRVRRKISG) is disordered. Basic residues predominate over residues 12-22 (LQRHKRVRRKI).

Belongs to the universal ribosomal protein uL18 family. In terms of assembly, part of the 50S ribosomal subunit; part of the 5S rRNA/L5/L18/L25 subcomplex. Contacts the 5S and 23S rRNAs.

Functionally, this is one of the proteins that bind and probably mediate the attachment of the 5S RNA into the large ribosomal subunit, where it forms part of the central protuberance. The protein is Large ribosomal subunit protein uL18 of Clostridioides difficile (strain 630) (Peptoclostridium difficile).